The following is a 290-amino-acid chain: MEIKSIKKLKLYGFNNLTKTLSFNMYDICYAKTPEHRKAYIEYIDEEYNSERLTNILIEVANIIGANILNIAKQDYDPQGASVTMLISEGKVEQDVENGQGNGNAIGSATDCDNGDGKAGEDCALLIPNAVAAHLDKSHITVHTYPESHPDKGISTFRADIDVSTCGMISPLKALNYLINSFSSDIVIADYRVRGFTRDVSGKKYFIDHKINSIQNYIAKETRELYQMIDVNVYQDNIFHTKMLLKEFDLDNYLFGTAKKELLPGEKKKIKQRLKKEMYEIFSGRNIPKV.

Serine 138 acts as the Schiff-base intermediate with substrate; via pyruvic acid in catalysis. The residue at position 138 (serine 138) is a Pyruvic acid (Ser); by autocatalysis. Catalysis depends on histidine 143, which acts as the Proton acceptor; for processing activity. The active-site Proton donor; for catalytic activity is cysteine 166.

The protein belongs to the prokaryotic AdoMetDC family. Type 2 subfamily. Heterooctamer of four alpha and four beta chains arranged as a tetramer of alpha/beta heterodimers. Pyruvate serves as cofactor. Post-translationally, is synthesized initially as an inactive proenzyme. Formation of the active enzyme involves a self-maturation process in which the active site pyruvoyl group is generated from an internal serine residue via an autocatalytic post-translational modification. Two non-identical subunits are generated from the proenzyme in this reaction, and the pyruvate is formed at the N-terminus of the alpha chain, which is derived from the carboxyl end of the proenzyme. The post-translation cleavage follows an unusual pathway, termed non-hydrolytic serinolysis, in which the side chain hydroxyl group of the serine supplies its oxygen atom to form the C-terminus of the beta chain, while the remainder of the serine residue undergoes an oxidative deamination to produce ammonia and the pyruvoyl group blocking the N-terminus of the alpha chain.

The catalysed reaction is S-adenosyl-L-methionine + H(+) = S-adenosyl 3-(methylsulfanyl)propylamine + CO2. It functions in the pathway amine and polyamine biosynthesis; S-adenosylmethioninamine biosynthesis; S-adenosylmethioninamine from S-adenosyl-L-methionine: step 1/1. Functionally, catalyzes the decarboxylation of S-adenosylmethionine to S-adenosylmethioninamine (dcAdoMet), the propylamine donor required for the synthesis of the polyamines spermine and spermidine from the diamine putrescine. The sequence is that of S-adenosylmethionine decarboxylase proenzyme from Heliobacterium modesticaldum (strain ATCC 51547 / Ice1).